We begin with the raw amino-acid sequence, 533 residues long: NAD(P)H-quinone oxidoreductase chain 4 2 (533 aa).

Helical transmembrane passes span 5 to 25, 33 to 53, 86 to 106, 114 to 134, 135 to 155, 168 to 188, 208 to 228, 242 to 262, 276 to 296, 310 to 330, 331 to 351, 384 to 404, 416 to 436, and 462 to 482; these read FPWLTVLTLLPLVAAFFIPVL, VRWYALAIALLEFGLSAMVFW, LAVPLILLTGLVNTLAIFAAW, LFYFLMLALYSAQIGVFAAQD, LILFFLIWELELVPVYLLISI, FILYTAVGSLFILIAGLGMAF, ALELLAYAGFLIAFGVKLPIF, SAPVSMVLAGVLLKMGGYGLI, FAPVLIALGVVNIIYGALTAF, ISHMGFVLLGIGALNGIGLNG, AMLQMLSHGLIAAVLFFLAGV, ASLALPGMSGFVSELTVFLGL, VGVIFLAAVGVIITPVYLLSM, and TFIALSLLVPIIAVGMYPKVA.

Belongs to the complex I subunit 4 family.

The protein resides in the cellular thylakoid membrane. The enzyme catalyses a plastoquinone + NADH + (n+1) H(+)(in) = a plastoquinol + NAD(+) + n H(+)(out). The catalysed reaction is a plastoquinone + NADPH + (n+1) H(+)(in) = a plastoquinol + NADP(+) + n H(+)(out). NDH-1 shuttles electrons from NAD(P)H, via FMN and iron-sulfur (Fe-S) centers, to quinones in the respiratory chain. The immediate electron acceptor for the enzyme in this species is believed to be plastoquinone. Couples the redox reaction to proton translocation (for every two electrons transferred, four hydrogen ions are translocated across the cytoplasmic membrane), and thus conserves the redox energy in a proton gradient. In Thermosynechococcus vestitus (strain NIES-2133 / IAM M-273 / BP-1), this protein is NAD(P)H-quinone oxidoreductase chain 4 2.